Here is a 288-residue protein sequence, read N- to C-terminus: Bifunctional protein FolD (288 aa).

NADP(+)-binding positions include 163-165 (GRS), serine 188, and isoleucine 229.

It belongs to the tetrahydrofolate dehydrogenase/cyclohydrolase family. As to quaternary structure, homodimer.

It carries out the reaction (6R)-5,10-methylene-5,6,7,8-tetrahydrofolate + NADP(+) = (6R)-5,10-methenyltetrahydrofolate + NADPH. The catalysed reaction is (6R)-5,10-methenyltetrahydrofolate + H2O = (6R)-10-formyltetrahydrofolate + H(+). It participates in one-carbon metabolism; tetrahydrofolate interconversion. In terms of biological role, catalyzes the oxidation of 5,10-methylenetetrahydrofolate to 5,10-methenyltetrahydrofolate and then the hydrolysis of 5,10-methenyltetrahydrofolate to 10-formyltetrahydrofolate. This Campylobacter curvus (strain 525.92) protein is Bifunctional protein FolD.